Here is a 353-residue protein sequence, read N- to C-terminus: Photosystem II protein D1 (353 aa).

The residue at position 2 (threonine 2) is an N-acetylthreonine. A Phosphothreonine modification is found at threonine 2. 3 helical membrane passes run 29 to 46 (YIGW…TATS), 118 to 133 (HFLL…EWEL), and 142 to 156 (WIAV…AATA). Histidine 118 provides a ligand contact to chlorophyll a. Pheophytin a is bound at residue tyrosine 126. [CaMn4O5] cluster-binding residues include aspartate 170 and glutamate 189. Residues 197-218 (FHMLGVAGVFGGSLFSAMHGSL) traverse the membrane as a helical segment. Histidine 198 lines the chlorophyll a pocket. A quinone contacts are provided by residues histidine 215 and 264 to 265 (SF). Histidine 215 contacts Fe cation. Histidine 272 is a binding site for Fe cation. A helical transmembrane segment spans residues 274 to 288 (FLAAWPVVGIWFTAL). [CaMn4O5] cluster-binding residues include histidine 332, glutamate 333, aspartate 342, and alanine 344. Residues 345–353 (AVEAPAVNG) constitute a propeptide that is removed on maturation.

Belongs to the reaction center PufL/M/PsbA/D family. In terms of assembly, PSII is composed of 1 copy each of membrane proteins PsbA, PsbB, PsbC, PsbD, PsbE, PsbF, PsbH, PsbI, PsbJ, PsbK, PsbL, PsbM, PsbT, PsbX, PsbY, PsbZ, Psb30/Ycf12, at least 3 peripheral proteins of the oxygen-evolving complex and a large number of cofactors. It forms dimeric complexes. Requires The D1/D2 heterodimer binds P680, chlorophylls that are the primary electron donor of PSII, and subsequent electron acceptors. It shares a non-heme iron and each subunit binds pheophytin, quinone, additional chlorophylls, carotenoids and lipids. D1 provides most of the ligands for the Mn4-Ca-O5 cluster of the oxygen-evolving complex (OEC). There is also a Cl(-1) ion associated with D1 and D2, which is required for oxygen evolution. The PSII complex binds additional chlorophylls, carotenoids and specific lipids. as cofactor. In terms of processing, tyr-161 forms a radical intermediate that is referred to as redox-active TyrZ, YZ or Y-Z. C-terminally processed by CTPA; processing is essential to allow assembly of the oxygen-evolving complex and thus photosynthetic growth.

The protein resides in the plastid. It is found in the chloroplast thylakoid membrane. It carries out the reaction 2 a plastoquinone + 4 hnu + 2 H2O = 2 a plastoquinol + O2. In terms of biological role, photosystem II (PSII) is a light-driven water:plastoquinone oxidoreductase that uses light energy to abstract electrons from H(2)O, generating O(2) and a proton gradient subsequently used for ATP formation. It consists of a core antenna complex that captures photons, and an electron transfer chain that converts photonic excitation into a charge separation. The D1/D2 (PsbA/PsbD) reaction center heterodimer binds P680, the primary electron donor of PSII as well as several subsequent electron acceptors. The polypeptide is Photosystem II protein D1 (Marchantia polymorpha (Common liverwort)).